The following is a 476-amino-acid chain: NADH-quinone oxidoreductase subunit N (476 aa).

14 helical membrane passes run 10-30, 42-62, 77-97, 108-128, 129-149, 162-182, 202-222, 234-254, 268-288, 296-316, 323-343, 368-388, 392-412, and 445-465; these read AVLPELLLALSAVVLVLIGAI, LAIAALVAAGVLVMLQPAVTI, FMKVVALLGAAVSLIMSVDWL, AVLVVLASLGICILISAGDLI, ALYLGLELMSLSLYVVAAINR, FVLGALSSGMLLYGASLIYGF, LVFGIVFLFAGLCFKVSAVPF, PTPVTAFFATAPKVAAMAVFV, WQQIVTFVSIASMALGAFAAI, LLAYSSIGHMGFALVGLAAGT, VLLYMAIYVVMTLGSFTCVLA, ALALAALMFSLAGIPPLAGFV, YVFLAAIQAGLYGLAVIGVVA, and AVLAVSGLFTTFFFLAPTPLI.

Belongs to the complex I subunit 2 family. NDH-1 is composed of 14 different subunits. Subunits NuoA, H, J, K, L, M, N constitute the membrane sector of the complex.

The protein resides in the cell inner membrane. It carries out the reaction a quinone + NADH + 5 H(+)(in) = a quinol + NAD(+) + 4 H(+)(out). Functionally, NDH-1 shuttles electrons from NADH, via FMN and iron-sulfur (Fe-S) centers, to quinones in the respiratory chain. The immediate electron acceptor for the enzyme in this species is believed to be ubiquinone. Couples the redox reaction to proton translocation (for every two electrons transferred, four hydrogen ions are translocated across the cytoplasmic membrane), and thus conserves the redox energy in a proton gradient. In Azorhizobium caulinodans (strain ATCC 43989 / DSM 5975 / JCM 20966 / LMG 6465 / NBRC 14845 / NCIMB 13405 / ORS 571), this protein is NADH-quinone oxidoreductase subunit N.